A 246-amino-acid polypeptide reads, in one-letter code: Probable phosphatase Ssed_2939 (246 aa).

Zn(2+)-binding residues include His-8, His-10, His-16, His-41, Glu-74, His-102, His-132, Asp-193, and His-195.

It belongs to the PHP family. Zn(2+) is required as a cofactor.

The chain is Probable phosphatase Ssed_2939 from Shewanella sediminis (strain HAW-EB3).